A 281-amino-acid polypeptide reads, in one-letter code: Arylamine N-acetyltransferase (281 aa).

The active-site Acyl-thioester intermediate is the C69. Active-site residues include H107 and D122. Residues K214 and K281 each carry the N6-acetyllysine modification.

It belongs to the arylamine N-acetyltransferase family. In terms of assembly, homodimer. In terms of processing, acetylated on Lys-214 and Lys-281. Deacetylated by CobB.

The protein resides in the cytoplasm. The catalysed reaction is an arylamine + acetyl-CoA = an N-acetylarylamine + CoA. It catalyses the reaction an N-hydroxyarylamine + acetyl-CoA = an N-acetoxyarylamine + CoA. Inhibited by salicylic acid, acetylsalicylic acid, 2,6-dichrolo-4-nitrophenol, N-ethylmaleimide and iodoacetamide. Functionally, catalyzes the acetyl-CoA-dependent N-acetylation of aromatic amines, and, probably, the O-acetylation of N-hydroxyarylamines. In vitro, catalyzes the N-acetylation of various arylamines such as aminobenzoic acid, aminophenol, aminotoluene, phenetidine, anisidine, aniline, isoniazid and 2-amino-fluorene. N-hydroxyarylamine O-acetyltransferase activity has not been assayed directly, however, NhoA activity is required for the mutagenicity of nitroaromatic compounds, suggesting that it also has O-acetyltransferase activity. This is Arylamine N-acetyltransferase (nhoA) from Escherichia coli (strain K12).